The following is a 375-amino-acid chain: Alpha-2,8-sialyltransferase 8B (375 aa).

The Cytoplasmic portion of the chain corresponds to 1–6 (MQLQFR). The helical; Signal-anchor for type II membrane protein transmembrane segment at 7-23 (SWMLAALTLLVVFLIFA) threads the bilayer. At 24–375 (DISEIEEEIG…LTVGQCDGAT (352 aa)) the chain is on the lumenal side. N-linked (GlcNAc...) asparagine glycosylation is found at asparagine 60, asparagine 72, asparagine 89, and asparagine 134. Cystine bridges form between cysteine 157–cysteine 307 and cysteine 171–cysteine 371. The CMP-N-acetyl-beta-neuraminate site is built by asparagine 162 and asparagine 185. N-linked (GlcNAc...) asparagine glycans are attached at residues asparagine 219 and asparagine 234. The CMP-N-acetyl-beta-neuraminate site is built by threonine 294, threonine 295, glycine 296, tryptophan 316, tyrosine 329, and histidine 330. Histidine 346 (proton donor/acceptor) is an active-site residue.

The protein belongs to the glycosyltransferase 29 family. Autopolysialylated. Autopolysialylation is not a prerequisite for the polysialylation acitity, but enhances the polysialylation acitity. In terms of tissue distribution, expressed only in newborn brain.

It is found in the golgi apparatus membrane. Its subcellular location is the secreted. The protein localises to the cell membrane. The catalysed reaction is [N-acetyl-alpha-D-neuraminosyl-(2-&gt;8)](n) + CMP-N-acetyl-beta-neuraminate = [N-acetyl-alpha-D-neuraminosyl-(2-&gt;8)](n+1) + CMP + H(+). It participates in protein modification; protein glycosylation. Its function is as follows. Catalyzes the transfer of a sialic acid from a CMP-linked sialic acid donor onto a terminal alpha-2,3-, alpha-2,6-, or alpha-2,8-linked sialic acid of an N-linked glycan acceptor through alpha-2,8-linkages. Therefore, participates in polysialic acid synthesis on various sialylated N-acetyllactosaminyl oligosaccharides (alpha-2,3-, alpha-2,6-, or alpha-2,8-linked sialic acid), including NCAM1, NCAM1 N-glycans, FETUB N-glycans, and to a lesser extent sialylparagloboside (SPG) and AHSG, which does not require the initial addition of an alpha 2,8-sialic acid. However, does not exhibit sialic acid-polymerase activity. Catalyzes polysialic acid synthesis in the hippocampal on NCAM1 and supports neurite outgrowth. ST8SIA2-mediated polysialylation influences on oligodendrocyte differentiation and may promote the integrity of myelin and axons. The chain is Alpha-2,8-sialyltransferase 8B from Rattus norvegicus (Rat).